The primary structure comprises 2184 residues: Genome polyprotein (2184 aa).

Residue Gly2 is the site of N-myristoyl glycine; by host attachment. Residues 2 to 1494 (GAQVSTQKTG…HVSRAFICLQ (1493 aa)) are Cytoplasmic-facing. The amphipathic alpha-helix stretch occupies residues 566-582 (FYQSPVEGAIERAIARV). Active-site for protease 2A activity residues include His871 and Asp889. Cys906 and Cys908 together coordinate Zn(2+). Cys960 (for protease 2A activity) is an active-site residue. 2 residues coordinate Zn(2+): Cys966 and His968. The membrane-binding stretch occupies residues 1100–1172 (SNGWLKKFTE…EQSAPSQSDQ (73 aa)). The interval 1100–1238 (SNGWLKKFTE…SPGAGKSVAT (139 aa)) is oligomerization. The segment at 1121 to 1125 (AIKIQ) is RNA-binding. Residues 1204 to 1360 (EKKMSNYIQF…SMYSQNGKIN (157 aa)) form the SF3 helicase domain. Residues Cys1368, Cys1380, and Cys1385 each contribute to the Zn(2+) site. A C4-type; degenerate zinc finger spans residues 1368–1385 (CDEECCPVNFKKCCPLVC). The tract at residues 1412–1419 (EYNHRHSV) is RNA-binding. The interval 1423–1428 (LEALFQ) is oligomerization. Residues 1495-1510 (ALTTFVSVAGIIYIIY) lie within the membrane without spanning it. Residues 1511–2184 (KLFAGFQGAY…TLRRKWLDSF (674 aa)) are Cytoplasmic-facing. An O-(5'-phospho-RNA)-tyrosine modification is found at Tyr1520. Residues 1540–1718 (GPAFEFAVAM…FSAALLKHYF (179 aa)) form the Peptidase C3 domain. Residues His1579, Glu1610, and Cys1686 each act as for protease 3C activity in the active site. The RdRp catalytic domain occupies 1949–2065 (GHLIAFDYSG…SYPWPIDASL (117 aa)). Mg(2+) is bound by residues Asp1955 and Asp2051.

Belongs to the picornaviruses polyprotein family. Interacts with capsid protein VP1 and capsid protein VP3 to form heterotrimeric protomers. In terms of assembly, interacts with capsid protein VP0, and capsid protein VP3 to form heterotrimeric protomers. Five protomers subsequently associate to form pentamers which serve as building blocks for the capsid. Interacts with capsid protein VP2, capsid protein VP3 and capsid protein VP4 following cleavage of capsid protein VP0. Interacts with host CXADR. As to quaternary structure, interacts with capsid protein VP1 and capsid protein VP3 in the mature capsid. Interacts with capsid protein VP0 and capsid protein VP1 to form heterotrimeric protomers. Five protomers subsequently associate to form pentamers which serve as building blocks for the capsid. Interacts with capsid protein VP4 in the mature capsid. Interacts with protein 2C; this interaction may be important for virion morphogenesis. In terms of assembly, interacts with capsid protein VP1 and capsid protein VP3. As to quaternary structure, homodimer. Homohexamer; forms a hexameric ring structure with 6-fold symmetry characteristic of AAA+ ATPases. Interacts (via N-terminus) with host RTN3 (via reticulon domain); this interaction is important for viral replication. Interacts with capsid protein VP3; this interaction may be important for virion morphogenesis. In terms of assembly, interacts with protein 3CD. As to quaternary structure, homodimer. Interacts with host GBF1. Interacts (via GOLD domain) with host ACBD3 (via GOLD domain); this interaction allows the formation of a viral protein 3A/ACBD3 heterotetramer with a 2:2 stoichiometry, which will stimulate the recruitment of host PI4KB in order to synthesize PI4P at the viral RNA replication sites. Interacts with RNA-directed RNA polymerase. In terms of assembly, interacts with protein 3AB and with RNA-directed RNA polymerase. As to quaternary structure, interacts with Viral protein genome-linked and with protein 3CD. The cofactor is Mg(2+). In terms of processing, specific enzymatic cleavages in vivo by the viral proteases yield processing intermediates and the mature proteins. Myristoylation is required for the formation of pentamers during virus assembly. Further assembly of 12 pentamers and a molecule of genomic RNA generates the provirion. Post-translationally, during virion maturation, immature virions are rendered infectious following cleavage of VP0 into VP4 and VP2. This maturation seems to be an autocatalytic event triggered by the presence of RNA in the capsid and it is followed by a conformational change infectious virion. In terms of processing, myristoylation is required during RNA encapsidation and formation of the mature virus particle. VPg is uridylylated by the polymerase into VPg-pUpU. This acts as a nucleotide-peptide primer for the genomic RNA replication.

Its subcellular location is the virion. The protein localises to the host cytoplasm. It localises to the host cytoplasmic vesicle membrane. The protein resides in the host nucleus. It catalyses the reaction a ribonucleoside 5'-triphosphate + H2O = a ribonucleoside 5'-diphosphate + phosphate + H(+). The catalysed reaction is Selective cleavage of Tyr-|-Gly bond in the picornavirus polyprotein.. The enzyme catalyses RNA(n) + a ribonucleoside 5'-triphosphate = RNA(n+1) + diphosphate. It carries out the reaction Selective cleavage of Gln-|-Gly bond in the poliovirus polyprotein. In other picornavirus reactions Glu may be substituted for Gln, and Ser or Thr for Gly.. Its activity is regulated as follows. Replication or transcription is subject to high level of random mutations by the nucleotide analog ribavirin. Functionally, forms an icosahedral capsid of pseudo T=3 symmetry with capsid proteins VP2 and VP3. The capsid is 300 Angstroms in diameter, composed of 60 copies of each capsid protein and enclosing the viral positive strand RNA genome. Capsid protein VP1 mainly forms the vertices of the capsid. Capsid protein VP1 interacts with host CXADR to provide virion attachment to target host cells. This attachment induces virion internalization. Tyrosine kinases are probably involved in the entry process. After binding to its receptor, the capsid undergoes conformational changes. Capsid protein VP1 N-terminus (that contains an amphipathic alpha-helix) and capsid protein VP4 are externalized. Together, they shape a pore in the host membrane through which viral genome is translocated to host cell cytoplasm. Forms an icosahedral capsid of pseudo T=3 symmetry with capsid proteins VP2 and VP3. The capsid is 300 Angstroms in diameter, composed of 60 copies of each capsid protein and enclosing the viral positive strand RNA genome. In terms of biological role, lies on the inner surface of the capsid shell. After binding to the host receptor, the capsid undergoes conformational changes. Capsid protein VP4 is released, Capsid protein VP1 N-terminus is externalized, and together, they shape a pore in the host membrane through which the viral genome is translocated into the host cell cytoplasm. Its function is as follows. Component of immature procapsids, which is cleaved into capsid proteins VP4 and VP2 after maturation. Allows the capsid to remain inactive before the maturation step. Functionally, cysteine protease that cleaves viral polyprotein and specific host proteins. It is responsible for the autocatalytic cleavage between the P1 and P2 regions, which is the first cleavage occurring in the polyprotein. Also cleaves the host translation initiation factor EIF4G1, in order to shut down the capped cellular mRNA translation. Inhibits the host nucleus-cytoplasm protein and RNA trafficking by cleaving host members of the nuclear pores. Counteracts stress granule formation probably by antagonizing its assembly or promoting its dissassembly. Cleaves and inhibits host IFIH1/MDA5, thereby inhibiting the type-I IFN production and the establishment of the antiviral state. Cleaves and inhibits host MAVS, thereby inhibiting the type-I IFN production and the establishment of the antiviral state. Plays an essential role in the virus replication cycle by acting as a viroporin. Creates a pore in the host endoplasmic reticulum and as a consequence releases Ca2+ in the cytoplasm of infected cell. In turn, high levels of cytoplasmic calcium may trigger membrane trafficking and transport of viral ER-associated proteins to viroplasms, sites of viral genome replication. In terms of biological role, induces and associates with structural rearrangements of intracellular membranes. Displays RNA-binding, nucleotide binding and NTPase activities. May play a role in virion morphogenesis and viral RNA encapsidation by interacting with the capsid protein VP3. Its function is as follows. Localizes the viral replication complex to the surface of membranous vesicles. Together with protein 3CD binds the Cis-Active RNA Element (CRE) which is involved in RNA synthesis initiation. Acts as a cofactor to stimulate the activity of 3D polymerase, maybe through a nucleid acid chaperone activity. Functionally, localizes the viral replication complex to the surface of membranous vesicles. It inhibits host cell endoplasmic reticulum-to-Golgi apparatus transport and causes the disassembly of the Golgi complex, possibly through GBF1 interaction. This would result in depletion of MHC, trail receptors and IFN receptors at the host cell surface. Plays an essential role in viral RNA replication by recruiting ACBD3 and PI4KB at the viral replication sites, thereby allowing the formation of the rearranged membranous structures where viral replication takes place. Acts as a primer for viral RNA replication and remains covalently bound to viral genomic RNA. VPg is uridylylated prior to priming replication into VPg-pUpU. The oriI viral genomic sequence may act as a template for this. The VPg-pUpU is then used as primer on the genomic RNA poly(A) by the RNA-dependent RNA polymerase to replicate the viral genome. During genome replication, the VPg-RNA linkage is removed by the host TDP2, thereby accelerating replication. During the late stage of the replication cycle, host TDP2 is excluded from sites of viral RNA synthesis and encapsidation, allowing for the generation of progeny virions. In terms of biological role, involved in the viral replication complex and viral polypeptide maturation. It exhibits protease activity with a specificity and catalytic efficiency that is different from protease 3C. Protein 3CD lacks polymerase activity. Protein 3CD binds to the 5'UTR of the viral genome. Its function is as follows. Replicates the viral genomic RNA on the surface of intracellular membranes. May form linear arrays of subunits that propagate along a strong head-to-tail interaction called interface-I. Covalently attaches UMP to a tyrosine of VPg, which is used to prime RNA synthesis. The positive stranded RNA genome is first replicated at virus induced membranous vesicles, creating a dsRNA genomic replication form. This dsRNA is then used as template to synthesize positive stranded RNA genomes. ss(+)RNA genomes are either translated, replicated or encapsidated. Functionally, major viral protease that mediates proteolytic processing of the polyprotein. Cleaves host EIF5B, contributing to host translation shutoff. Also cleaves host PABPC1, contributing to host translation shutoff. Cleaves host NLRP1, triggers host N-glycine-mediated degradation of the autoinhibitory NLRP1 N-terminal fragment. The sequence is that of Genome polyprotein from Coxsackievirus B6 (strain Schmitt).